The sequence spans 365 residues: Class I histocompatibility antigen, Gogo-A*0101 alpha chain (365 aa).

Positions 1-24 are cleaved as a signal peptide; sequence MAVMAPRTLVLLLSGALALTQTWA. The interval 25–114 is alpha-1; it reads GSHSMRYFST…LRGYYNQSED (90 aa). Residues 25 to 308 lie on the Extracellular side of the membrane; sequence GSHSMRYFST…EPSSQPTIPI (284 aa). N-linked (GlcNAc...) asparagine glycosylation occurs at asparagine 110. Residues 115–206 form an alpha-2 region; the sequence is GSHTIQRMYG…ENGKETLQRT (92 aa). 2 disulfide bridges follow: cysteine 125–cysteine 188 and cysteine 227–cysteine 283. Residues 207–298 are alpha-3; it reads DAPKTHMTHH…GLPEPLTLRW (92 aa). Residues 209–297 form the Ig-like C1-type domain; the sequence is PKTHMTHHAV…EGLPEPLTLR (89 aa). The interval 299–308 is connecting peptide; that stretch reads EPSSQPTIPI. A helical membrane pass occupies residues 309–332; sequence VGIIAGLVLFGAVIAGAVVAAVRW. The Cytoplasmic portion of the chain corresponds to 333 to 365; the sequence is RRKSSDRKGGSYSQAASSDSAQGSDVSLTACKV. The segment at 338-365 is disordered; it reads DRKGGSYSQAASSDSAQGSDVSLTACKV. Residues 342 to 359 show a composition bias toward low complexity; sequence GSYSQAASSDSAQGSDVS. Phosphoserine is present on serine 343. Tyrosine 344 carries the phosphotyrosine modification. Residues serine 345, serine 349, serine 350, serine 352, serine 356, and serine 359 each carry the phosphoserine modification.

This sequence belongs to the MHC class I family. In terms of assembly, heterodimer of an alpha chain and a beta chain (beta-2-microglobulin).

Its subcellular location is the membrane. Involved in the presentation of foreign antigens to the immune system. The chain is Class I histocompatibility antigen, Gogo-A*0101 alpha chain from Gorilla gorilla gorilla (Western lowland gorilla).